A 376-amino-acid chain; its full sequence is ATP phosphoribosyltransferase regulatory subunit (376 aa).

The protein belongs to the class-II aminoacyl-tRNA synthetase family. HisZ subfamily. As to quaternary structure, heteromultimer composed of HisG and HisZ subunits.

It is found in the cytoplasm. It functions in the pathway amino-acid biosynthesis; L-histidine biosynthesis; L-histidine from 5-phospho-alpha-D-ribose 1-diphosphate: step 1/9. Its function is as follows. Required for the first step of histidine biosynthesis. May allow the feedback regulation of ATP phosphoribosyltransferase activity by histidine. The protein is ATP phosphoribosyltransferase regulatory subunit of Brucella ovis (strain ATCC 25840 / 63/290 / NCTC 10512).